A 174-amino-acid chain; its full sequence is UPF0316 protein LMOf2365_1801 (174 aa).

3 consecutive transmembrane segments (helical) span residues 4–24, 36–56, and 62–82; these read GIFI…IYTV, LAAL…SLVL, and IANV…GMKI.

This sequence belongs to the UPF0316 family.

It localises to the cell membrane. The chain is UPF0316 protein LMOf2365_1801 from Listeria monocytogenes serotype 4b (strain F2365).